Consider the following 74-residue polypeptide: MFESTRKNIQPSDATLVITQTRGVTGSKQNHRDTLRSLGLKRIGHQVTRKADAVTVGMVNTVPHLVSVEEVNNG.

It belongs to the universal ribosomal protein uL30 family. Part of the 50S ribosomal subunit.

The polypeptide is Large ribosomal subunit protein uL30 (Micrococcus luteus (strain ATCC 4698 / DSM 20030 / JCM 1464 / CCM 169 / CCUG 5858 / IAM 1056 / NBRC 3333 / NCIMB 9278 / NCTC 2665 / VKM Ac-2230) (Micrococcus lysodeikticus)).